We begin with the raw amino-acid sequence, 1411 residues long: ATP-dependent permease PDR11 (1411 aa).

The Cytoplasmic segment spans residues S2 to Q388. In terms of domain architecture, ABC transporter 1 spans V31 to N273. The helical transmembrane segment at F389 to T409 threads the bilayer. At T410–S418 the chain is on the extracellular side. Residues L419–F439 traverse the membrane as a helical segment. The Cytoplasmic segment spans residues Q440–K471. A helical membrane pass occupies residues F472–A492. At A493–R494 the chain is on the extracellular side. Residues F495–L515 traverse the membrane as a helical segment. Topologically, residues T516–S524 are cytoplasmic. Residues M525–I545 form a helical membrane-spanning segment. Residues Y546–F636 lie on the Extracellular side of the membrane. An N-linked (GlcNAc...) asparagine glycan is attached at N595. The chain crosses the membrane as a helical span at residues G637–I657. Over T658–T1090 the chain is Cytoplasmic. The ABC transporter 2 domain occupies I751 to F979. G782–T789 is an ATP binding site. A helical transmembrane segment spans residues Y1091 to W1111. The Extracellular portion of the chain corresponds to R1112 to I1117. Residues N1118–I1138 form a helical membrane-spanning segment. The Cytoplasmic segment spans residues N1139–E1175. Residues L1176–F1196 form a helical membrane-spanning segment. Residues E1197 to G1204 lie on the Extracellular side of the membrane. Residues V1205 to L1225 traverse the membrane as a helical segment. Over Y1226–D1230 the chain is Cytoplasmic. Residues L1231–V1251 traverse the membrane as a helical segment. Residues M1252 to N1355 are Extracellular-facing. 3 N-linked (GlcNAc...) asparagine glycosylation sites follow: N1289, N1324, and N1346. Residues F1356–L1376 traverse the membrane as a helical segment. Residues T1377–V1411 lie on the Cytoplasmic side of the membrane.

The protein belongs to the ABC transporter superfamily. ABCG family. PDR (TC 3.A.1.205) subfamily.

The protein resides in the membrane. In terms of biological role, transporter involved in the uptake of sterol. The chain is ATP-dependent permease PDR11 (PDR11) from Saccharomyces cerevisiae (strain ATCC 204508 / S288c) (Baker's yeast).